Here is a 197-residue protein sequence, read N- to C-terminus: Protocatechuate 3,4-dioxygenase alpha chain (197 aa).

Residue arginine 130 participates in 3,4-dihydroxybenzoate binding.

It belongs to the intradiol ring-cleavage dioxygenase family. In terms of assembly, the enzyme is an oligomer of 12 copies of the alpha and beta chains. Fe(3+) is required as a cofactor.

The catalysed reaction is 3,4-dihydroxybenzoate + O2 = 3-carboxy-cis,cis-muconate + 2 H(+). The protein operates within aromatic compound metabolism; beta-ketoadipate pathway; 3-carboxy-cis,cis-muconate from 3,4-dihydroxybenzoate: step 1/1. Plays an essential role in the utilization of numerous aromatic and hydroaromatic compounds via the beta-ketoadipate pathway. In Burkholderia cepacia (Pseudomonas cepacia), this protein is Protocatechuate 3,4-dioxygenase alpha chain (pcaG).